Reading from the N-terminus, the 276-residue chain is ADP-dependent (S)-NAD(P)H-hydrate dehydratase (276 aa).

One can recognise a YjeF C-terminal domain in the interval 5–269; sequence TPKAMCAWIP…EELPTYLKIF (265 aa). (6S)-NADPHX-binding residues include Ala-40, Gly-103, and His-152. Gly-211 serves as a coordination point for AMP. Asp-212 contributes to the (6S)-NADPHX binding site.

This sequence belongs to the NnrD/CARKD family. Homotetramer. The cofactor is Mg(2+).

It carries out the reaction (6S)-NADHX + ADP = AMP + phosphate + NADH + H(+). It catalyses the reaction (6S)-NADPHX + ADP = AMP + phosphate + NADPH + H(+). Catalyzes the dehydration of the S-form of NAD(P)HX at the expense of ADP, which is converted to AMP. Together with NAD(P)HX epimerase, which catalyzes the epimerization of the S- and R-forms, the enzyme allows the repair of both epimers of NAD(P)HX, a damaged form of NAD(P)H that is a result of enzymatic or heat-dependent hydration. The sequence is that of ADP-dependent (S)-NAD(P)H-hydrate dehydratase from Listeria monocytogenes serovar 1/2a (strain ATCC BAA-679 / EGD-e).